Reading from the N-terminus, the 133-residue chain is Small ribosomal subunit protein uS8 (133 aa).

The protein belongs to the universal ribosomal protein uS8 family. In terms of assembly, part of the 30S ribosomal subunit. Contacts proteins S5 and S12.

In terms of biological role, one of the primary rRNA binding proteins, it binds directly to 16S rRNA central domain where it helps coordinate assembly of the platform of the 30S subunit. This chain is Small ribosomal subunit protein uS8, found in Mycoplasma mobile (strain ATCC 43663 / 163K / NCTC 11711) (Mesomycoplasma mobile).